A 335-amino-acid chain; its full sequence is Tetraacyldisaccharide 4'-kinase (335 aa).

62–69 (NVGGTGKT) is a binding site for ATP.

Belongs to the LpxK family.

The catalysed reaction is a lipid A disaccharide + ATP = a lipid IVA + ADP + H(+). The protein operates within glycolipid biosynthesis; lipid IV(A) biosynthesis; lipid IV(A) from (3R)-3-hydroxytetradecanoyl-[acyl-carrier-protein] and UDP-N-acetyl-alpha-D-glucosamine: step 6/6. Its function is as follows. Transfers the gamma-phosphate of ATP to the 4'-position of a tetraacyldisaccharide 1-phosphate intermediate (termed DS-1-P) to form tetraacyldisaccharide 1,4'-bis-phosphate (lipid IVA). The sequence is that of Tetraacyldisaccharide 4'-kinase from Methylobacillus flagellatus (strain ATCC 51484 / DSM 6875 / VKM B-1610 / KT).